A 462-amino-acid polypeptide reads, in one-letter code: ATP synthase subunit beta (462 aa).

151–158 is an ATP binding site; it reads GGAGVGKT.

It belongs to the ATPase alpha/beta chains family. As to quaternary structure, F-type ATPases have 2 components, CF(1) - the catalytic core - and CF(0) - the membrane proton channel. CF(1) has five subunits: alpha(3), beta(3), gamma(1), delta(1), epsilon(1). CF(0) has four main subunits: a(1), b(1), b'(1) and c(9-12).

It is found in the cell inner membrane. The catalysed reaction is ATP + H2O + 4 H(+)(in) = ADP + phosphate + 5 H(+)(out). Produces ATP from ADP in the presence of a proton gradient across the membrane. The catalytic sites are hosted primarily by the beta subunits. The chain is ATP synthase subunit beta from Chlorobium limicola (strain DSM 245 / NBRC 103803 / 6330).